Here is a 435-residue protein sequence, read N- to C-terminus: Probable long-chain-alcohol O-fatty-acyltransferase 11 (435 aa).

The next 11 helical transmembrane spans lie at 7-27 (NLIKVSVSVIISISYCYYVPT), 36-56 (FLSVLPICALFRVLPLFFASV), 59-79 (SGYTALFISWLANFKLILFSF), 120-140 (PIEVLFSNQFVTKVVILSVVL), 149-169 (IYPIVLFVLYPLHLYLVLEIL), 200-220 (DFWGHWWTLMLPTILLPDVYA), 238-258 (LGVFVTFLVSGALHEFLFFYI), 263-283 (PTGEVTLFFVLHGVCIVAYDA), 300-320 (CLILQVMVMGFVVVTAGWLFF), 363-383 (FFTGFVMRKLFNGALFFIGFV), and 406-426 (FFIGFVIRKLFNEAMFFIGFV).

This sequence belongs to the wax synthase family.

Its subcellular location is the membrane. It carries out the reaction a long chain fatty alcohol + a fatty acyl-CoA = a wax ester + CoA. In terms of biological role, catalyzes the final step in the synthesis of long-chain linear esters (waxes). The protein is Probable long-chain-alcohol O-fatty-acyltransferase 11 of Arabidopsis thaliana (Mouse-ear cress).